The chain runs to 528 residues: Serine/threonine-protein kinase akt-2 (528 aa).

A PH domain is found at 12–115; that stretch reads DIVIESWLHK…WIEAIQAVSS (104 aa). Residues 121-153 form a disordered region; that stretch reads ENAGNTSMQEEDTNGNPSGESDVNMDATSTRSD. Polar residues predominate over residues 123 to 153; that stretch reads AGNTSMQEEDTNGNPSGESDVNMDATSTRSD. The Protein kinase domain occupies 180-437; it reads FDFLKVLGQG…AREVSRAEFF (258 aa). ATP is bound by residues 186–194 and lysine 209; that span reads LGQGTFGKV. Residue aspartate 303 is the Proton acceptor of the active site. In terms of domain architecture, AGC-kinase C-terminal spans 438–515; that stretch reads KDVDWEATLR…YYVSGSLERS (78 aa).

Belongs to the protein kinase superfamily. AGC Ser/Thr protein kinase family. RAC subfamily. As to quaternary structure, interacts with pdk-1, sgk-1, akt-1 and daf-16. Part of a complex containing sgk-1, akt-1 and akt-2. Requires Mg(2+) as cofactor. Expressed in neurons, muscle cells of the pharynx, rectal gland cells, and spermatheca.

The enzyme catalyses L-seryl-[protein] + ATP = O-phospho-L-seryl-[protein] + ADP + H(+). It catalyses the reaction L-threonyl-[protein] + ATP = O-phospho-L-threonyl-[protein] + ADP + H(+). With respect to regulation, phosphorylated and activated by pdk-1. In terms of biological role, acts downstream of PI3 kinase age-1 and kinase pdk-1 in the daf-2/insulin receptor-like transduction pathway. Essential role in regulating developmental arrest at the dauer stage. Phosphorylates Forkhead-related daf-16 and the longevity-promoting skn-1 transcription factors, which inhibits their entry into the nucleus and antagonizes their functions. Role in immune function and pathogen resistance. Downstream of age-1 and together with akt-1 and sgk-1, promotes cell survival during embryonic development. Plays a role in maintaining the gonadal basement membrane through antagonizing akt-1 activity. This chain is Serine/threonine-protein kinase akt-2, found in Caenorhabditis elegans.